The sequence spans 273 residues: Nitrogenase iron protein 2 (273 aa).

8-15 (GKGGIGKS) is a binding site for ATP. Cys95 contacts [4Fe-4S] cluster. Residue Arg98 is modified to ADP-ribosylarginine; by dinitrogenase reductase ADP-ribosyltransferase. Cys130 is a binding site for [4Fe-4S] cluster.

Belongs to the NifH/BchL/ChlL family. As to quaternary structure, homodimer. It depends on [4Fe-4S] cluster as a cofactor. The reversible ADP-ribosylation of Arg-98 inactivates the nitrogenase reductase and regulates nitrogenase activity.

The enzyme catalyses N2 + 8 reduced [2Fe-2S]-[ferredoxin] + 16 ATP + 16 H2O = H2 + 8 oxidized [2Fe-2S]-[ferredoxin] + 2 NH4(+) + 16 ADP + 16 phosphate + 6 H(+). Its function is as follows. The key enzymatic reactions in nitrogen fixation are catalyzed by the nitrogenase complex, which has 2 components: the iron protein and the molybdenum-iron protein. This Methanosarcina barkeri protein is Nitrogenase iron protein 2 (nifH2).